A 390-amino-acid polypeptide reads, in one-letter code: Flap endonuclease 1 (390 aa).

An N-domain region spans residues 1-111 (MGIKGLAKLL…GELLKRREKR (111 aa)). Asp-34 contacts Mg(2+). The DNA site is built by Arg-47 and Arg-77. Residues Asp-93, Glu-165, Glu-167, Asp-186, and Asp-188 each coordinate Mg(2+). The segment at 129-260 (EQDKQSKRLV…KTALKLIREH (132 aa)) is I-domain. Residue Glu-165 coordinates DNA. Gly-238 and Asp-240 together coordinate DNA. Asp-240 contacts Mg(2+). The segment at 342–390 (KPQSRMDSFFKVKANPEGDKKKAEKRKAELAASRGKGKKGKGGGGFKKK) is disordered. An interaction with PCNA region spans residues 343–351 (PQSRMDSFF). A compositionally biased stretch (basic and acidic residues) spans 349 to 370 (SFFKVKANPEGDKKKAEKRKAE). Residues 376–390 (GKGKKGKGGGGFKKK) show a composition bias toward basic residues.

This sequence belongs to the XPG/RAD2 endonuclease family. FEN1 subfamily. Interacts with PCNA. Three molecules of FEN1 bind to one PCNA trimer with each molecule binding to one PCNA monomer. PCNA stimulates the nuclease activity without altering cleavage specificity. Requires Mg(2+) as cofactor. Post-translationally, phosphorylated. Phosphorylation upon DNA damage induces relocalization to the nuclear plasma.

It is found in the nucleus. The protein localises to the nucleolus. The protein resides in the nucleoplasm. Its subcellular location is the mitochondrion. Its function is as follows. Structure-specific nuclease with 5'-flap endonuclease and 5'-3' exonuclease activities involved in DNA replication and repair. During DNA replication, cleaves the 5'-overhanging flap structure that is generated by displacement synthesis when DNA polymerase encounters the 5'-end of a downstream Okazaki fragment. It enters the flap from the 5'-end and then tracks to cleave the flap base, leaving a nick for ligation. Also involved in the long patch base excision repair (LP-BER) pathway, by cleaving within the apurinic/apyrimidinic (AP) site-terminated flap. Acts as a genome stabilization factor that prevents flaps from equilibrating into structures that lead to duplications and deletions. Also possesses 5'-3' exonuclease activity on nicked or gapped double-stranded DNA, and exhibits RNase H activity. Also involved in replication and repair of rDNA and in repairing mitochondrial DNA. This chain is Flap endonuclease 1, found in Thalassiosira pseudonana (Marine diatom).